The following is a 283-amino-acid chain: Pantothenate synthetase (283 aa).

Position 30 to 37 (30 to 37 (MGALHEGH)) interacts with ATP. His37 functions as the Proton donor in the catalytic mechanism. Residue Gln61 coordinates (R)-pantoate. Gln61 is a beta-alanine binding site. 149–152 (GEKD) contacts ATP. (R)-pantoate is bound at residue Gln155. Residues Leu178 and 186-189 (RSSR) each bind ATP.

Belongs to the pantothenate synthetase family. As to quaternary structure, homodimer.

The protein resides in the cytoplasm. It carries out the reaction (R)-pantoate + beta-alanine + ATP = (R)-pantothenate + AMP + diphosphate + H(+). It participates in cofactor biosynthesis; (R)-pantothenate biosynthesis; (R)-pantothenate from (R)-pantoate and beta-alanine: step 1/1. In terms of biological role, catalyzes the condensation of pantoate with beta-alanine in an ATP-dependent reaction via a pantoyl-adenylate intermediate. This is Pantothenate synthetase from Christiangramia forsetii (strain DSM 17595 / CGMCC 1.15422 / KT0803) (Gramella forsetii).